Here is a 265-residue protein sequence, read N- to C-terminus: Hydroxyethylthiazole kinase (265 aa).

Position 55 (methionine 55) interacts with substrate. 2 residues coordinate ATP: arginine 130 and serine 176. Glycine 203 contacts substrate.

Belongs to the Thz kinase family. Mg(2+) serves as cofactor.

It catalyses the reaction 5-(2-hydroxyethyl)-4-methylthiazole + ATP = 4-methyl-5-(2-phosphooxyethyl)-thiazole + ADP + H(+). Its pathway is cofactor biosynthesis; thiamine diphosphate biosynthesis; 4-methyl-5-(2-phosphoethyl)-thiazole from 5-(2-hydroxyethyl)-4-methylthiazole: step 1/1. Its function is as follows. Catalyzes the phosphorylation of the hydroxyl group of 4-methyl-5-beta-hydroxyethylthiazole (THZ). This chain is Hydroxyethylthiazole kinase, found in Leptospira interrogans serogroup Icterohaemorrhagiae serovar copenhageni (strain Fiocruz L1-130).